A 296-amino-acid chain; its full sequence is Sulfotransferase 1C2 (296 aa).

49–54 (KSGTTW) contacts 3'-phosphoadenylyl sulfate. Residue 107–109 (RTH) coordinates substrate. His-109 acts as the Proton acceptor in catalysis. 3'-phosphoadenylyl sulfate is bound by residues Arg-131, Ser-139, Tyr-194, and 228–233 (TSFEKM). Ser-139 bears the Phosphoserine mark. Residue Ser-254 is modified to Phosphoserine. 3'-phosphoadenylyl sulfate is bound at residue 256 to 260 (FMRKG).

The protein belongs to the sulfotransferase 1 family. As to expression, highly expressed in kidney and at lower levels in stomach and liver. More specifically found in the epithelia of proximal tubules of the kidney, of the bile duct, of the gastric mucosa, and in hepatocytes.

The protein localises to the cytoplasm. The protein resides in the lysosome. It is found in the mitochondrion. It carries out the reaction a phenol + 3'-phosphoadenylyl sulfate = an aryl sulfate + adenosine 3',5'-bisphosphate + H(+). The catalysed reaction is cholesterol + 3'-phosphoadenylyl sulfate = cholesterol sulfate + adenosine 3',5'-bisphosphate + H(+). Its function is as follows. Sulfotransferase that utilizes 3'-phospho-5'-adenylyl sulfate (PAPS) to catalyze the sulfate conjugation of phenolic compounds. Does not transfer sulfate to steroids, dopamine, acetaminophen, or alpha-naphthol. Except in mitochondria, where it can add sulfate to cholesterol producing cholesterol sulfate, which alters mitochondrial membrane organization, and impacts protein complex mobility increasing state-III respiration, thereby modulating mitochondrial respiration. Catalyzes the sulfation of the carcinogenic N-hydroxy-2-acetylaminofluorene leading to highly reactive intermediates capable of forming DNA adducts, potentially resulting in mutagenesis. In Rattus norvegicus (Rat), this protein is Sulfotransferase 1C2 (Sult1c2).